We begin with the raw amino-acid sequence, 619 residues long: Alpha-L-arabinofuranosidase C (619 aa).

Residues 1 to 37 form the signal peptide; it reads MINHNKTPNILAKVFKRTCGLVSTGAALAILSQAASA. Positions 38–136 constitute a CBM2 domain; it reads ACTYTIDSEW…TVTGAACNSA (99 aa). Cys-39 and Cys-133 form a disulfide bridge. Residues 163 to 289 form the CBM6 domain; the sequence is LLQEAQAGFC…LPNIDSLSVV (127 aa). A disordered region spans residues 300-319; that stretch reads SVSSSSSVQSSSSSSSTPSQ.

The protein belongs to the glycosyl hydrolase 62 family.

Its subcellular location is the secreted. The catalysed reaction is Hydrolysis of terminal non-reducing alpha-L-arabinofuranoside residues in alpha-L-arabinosides.. Its pathway is glycan metabolism; hemicellulose degradation. Xylanase C contributes to hydrolyze hemicellulose, the major component of plant cell-walls. The polypeptide is Alpha-L-arabinofuranosidase C (xynC) (Cellvibrio japonicus (strain Ueda107) (Pseudomonas fluorescens subsp. cellulosa)).